Reading from the N-terminus, the 470-residue chain is Cell division protein FtsA (470 aa).

The segment at 416-470 is disordered; the sequence is NKKDTHENEVESTDEEIYQSEDNHQEHKQNHEHVQDKDKDKEESKFKKLMKSLFE. A compositionally biased stretch (acidic residues) spans 425–434; the sequence is VESTDEEIYQ. Positions 436-461 are enriched in basic and acidic residues; that stretch reads EDNHQEHKQNHEHVQDKDKDKEESKF.

This sequence belongs to the FtsA/MreB family. As to quaternary structure, self-interacts. Interacts with FtsZ.

It localises to the cell membrane. Functionally, cell division protein that is involved in the assembly of the Z ring. May serve as a membrane anchor for the Z ring. The chain is Cell division protein FtsA from Staphylococcus aureus (strain MSSA476).